We begin with the raw amino-acid sequence, 144 residues long: SVVKSEDFSLPAYVDRRDHPLPEVAHVKLLSASQKALKENEKAAWSSLSMDEKVELYRIKFKESFAEMNRGSNEWKTVVGGAMFFIGFTALIIMWQKHYVYGPLPQTFDKEWVGKQTKRMLDMKVNPIQGLASKWDYEKNEWKK.

Over 1–73 the chain is Mitochondrial matrix; sequence SVVKSEDFSL…SFAEMNRGSN (73 aa). Residue K4 is modified to N6-acetyllysine; alternate. Residue K4 is modified to N6-succinyllysine; alternate. K28 carries the post-translational modification N6-acetyllysine. 2 positions are modified to phosphoserine: S31 and S33. K35 bears the N6-acetyllysine; alternate mark. K35 carries the post-translational modification N6-succinyllysine; alternate. K42 is modified (N6-acetyllysine). The chain crosses the membrane as a helical span at residues 74–99; that stretch reads EWKTVVGGAMFFIGFTALIIMWQKHY. Residues 100–144 lie on the Mitochondrial intermembrane side of the membrane; the sequence is VYGPLPQTFDKEWVGKQTKRMLDMKVNPIQGLASKWDYEKNEWKK.

It belongs to the cytochrome c oxidase IV family. In terms of assembly, component of the cytochrome c oxidase (complex IV, CIV), a multisubunit enzyme composed of 14 subunits. The complex is composed of a catalytic core of 3 subunits MT-CO1, MT-CO2 and MT-CO3, encoded in the mitochondrial DNA, and 11 supernumerary subunits COX4I, COX5A, COX5B, COX6A, COX6B, COX6C, COX7A, COX7B, COX7C, COX8 and NDUFA4, which are encoded in the nuclear genome. The complex exists as a monomer or a dimer and forms supercomplexes (SCs) in the inner mitochondrial membrane with NADH-ubiquinone oxidoreductase (complex I, CI) and ubiquinol-cytochrome c oxidoreductase (cytochrome b-c1 complex, complex III, CIII), resulting in different assemblies (supercomplex SCI(1)III(2)IV(1) and megacomplex MCI(2)III(2)IV(2)). Interacts with PHB2; the interaction decreases in absence of SPHK2. Interacts with AFG1L. Interacts with ABCB7; this interaction allows the regulation of cellular iron homeostasis and cellular reactive oxygen species (ROS) levels in cardiomyocytes. Interacts with FLVCR2; this interaction occurs in the absence of heme and is disrupted upon heme binding. Interacts with IRGC.

The protein resides in the mitochondrion inner membrane. It functions in the pathway energy metabolism; oxidative phosphorylation. Its function is as follows. Component of the cytochrome c oxidase, the last enzyme in the mitochondrial electron transport chain which drives oxidative phosphorylation. The respiratory chain contains 3 multisubunit complexes succinate dehydrogenase (complex II, CII), ubiquinol-cytochrome c oxidoreductase (cytochrome b-c1 complex, complex III, CIII) and cytochrome c oxidase (complex IV, CIV), that cooperate to transfer electrons derived from NADH and succinate to molecular oxygen, creating an electrochemical gradient over the inner membrane that drives transmembrane transport and the ATP synthase. Cytochrome c oxidase is the component of the respiratory chain that catalyzes the reduction of oxygen to water. Electrons originating from reduced cytochrome c in the intermembrane space (IMS) are transferred via the dinuclear copper A center (CU(A)) of subunit 2 and heme A of subunit 1 to the active site in subunit 1, a binuclear center (BNC) formed by heme A3 and copper B (CU(B)). The BNC reduces molecular oxygen to 2 water molecules using 4 electrons from cytochrome c in the IMS and 4 protons from the mitochondrial matrix. In Hylobates agilis (Agile gibbon), this protein is Cytochrome c oxidase subunit 4 isoform 1, mitochondrial (COX4I1).